The following is a 38-amino-acid chain: Toxic protein TimP (38 aa).

A membrane pass occupies residues 1-20 (MKVRCFCVVLLVSGTLCLHA).

The protein belongs to the TimP toxin family.

It localises to the cell inner membrane. Its function is as follows. Toxic component of a probable type I toxin-antitoxin (TA) system. Neutralized by sRNA antitoxin TimR which binds to the 5' UTR of timP mRNA and inhibits translation. When TimP is expressed from its promoter in the absence of antitoxin leads to mild cell stress; overexpression in situ is toxic to the cell and causes membrane leakage. The antitoxin gene is encoded immediately upstream and transcribed divergently from the toxin gene; antitoxin RNA is less stable than timP mRNA. This is Toxic protein TimP from Salmonella typhimurium (strain SL1344).